The chain runs to 275 residues: Diaminopimelate epimerase (275 aa).

The substrate site is built by N12, Q45, and N65. Catalysis depends on C74, which acts as the Proton donor. Residues G75 to N76, N158, N191, and E209 to R210 contribute to the substrate site. C218 (proton acceptor) is an active-site residue. Residue G219–T220 coordinates substrate.

Belongs to the diaminopimelate epimerase family. As to quaternary structure, homodimer.

The protein resides in the cytoplasm. The enzyme catalyses (2S,6S)-2,6-diaminopimelate = meso-2,6-diaminopimelate. The protein operates within amino-acid biosynthesis; L-lysine biosynthesis via DAP pathway; DL-2,6-diaminopimelate from LL-2,6-diaminopimelate: step 1/1. Functionally, catalyzes the stereoinversion of LL-2,6-diaminopimelate (L,L-DAP) to meso-diaminopimelate (meso-DAP), a precursor of L-lysine and an essential component of the bacterial peptidoglycan. In Shewanella denitrificans (strain OS217 / ATCC BAA-1090 / DSM 15013), this protein is Diaminopimelate epimerase.